The primary structure comprises 142 residues: Peptide methionine sulfoxide reductase MsrB (142 aa).

Residues 2–125 (LKKDKSELTD…NSAAIQFIPY (124 aa)) enclose the MsrB domain. Catalysis depends on Cys114, which acts as the Nucleophile.

It belongs to the MsrB Met sulfoxide reductase family.

The enzyme catalyses L-methionyl-[protein] + [thioredoxin]-disulfide + H2O = L-methionyl-(R)-S-oxide-[protein] + [thioredoxin]-dithiol. In Staphylococcus aureus (strain USA300), this protein is Peptide methionine sulfoxide reductase MsrB.